Here is a 180-residue protein sequence, read N- to C-terminus: MADSELQLVEQRIRSFPDFPTPGVVFRDISPVLKDPASFRAAIGLLARHLKATHGGRIDYIAGLDSRGFLFGPSLAQELGLGCVLIRKRGKLPGPTLWASYSLEYGKAELEIQKDALEPGQRVVVVDDLLATGGTMNAACELLGRLQAEVLECVSLVELTSLKGREKLAPVPFFSLLQYE.

Ala2 bears the N-acetylalanine mark. 3 positions are modified to phosphoserine: Ser4, Ser15, and Ser30. Phosphotyrosine is present on Tyr60. Ser66 carries the phosphoserine modification. Residue Lys114 is modified to N6-acetyllysine. Thr135 carries the phosphothreonine modification.

It belongs to the purine/pyrimidine phosphoribosyltransferase family. Homodimer.

The protein resides in the cytoplasm. The catalysed reaction is AMP + diphosphate = 5-phospho-alpha-D-ribose 1-diphosphate + adenine. Its pathway is purine metabolism; AMP biosynthesis via salvage pathway; AMP from adenine: step 1/1. Its function is as follows. Catalyzes a salvage reaction resulting in the formation of AMP, that is energically less costly than de novo synthesis. In Homo sapiens (Human), this protein is Adenine phosphoribosyltransferase.